Reading from the N-terminus, the 397-residue chain is Iripin-2 (397 aa).

The N-terminal stretch at 1 to 21 is a signal peptide; that stretch reads MEDFKMKTLAAFLSLLVLCWA. Asn-109 and Asn-270 each carry an N-linked (GlcNAc...) asparagine glycan.

It belongs to the serpin family. As to quaternary structure, interacts with mouse MCPT4. As to expression, female salivary gland. Ovary. Midgut.

It localises to the secreted. In terms of biological role, serine protease inhibitor that modulates blood feeding of ticks on vertebrate species. Inhibits host trypsin, thrombin (F2), alpha-chymotrypsin, cathepsin G (CTSG) and mast cell chymase (CMA1). Inhibits host cathepsin G- and thrombin-induced platelet aggregation. Inhibits acute inflammation in the host. Suppresses neutrophil recruitment in inflamed area. Does not inhibit host plasmin (PLG), factor Xa (F10), factor XIa (F11), elastase and proteinase 3/myeloblastin (PRTN3). (Microbial infection) Inhibits IL6 production by mouse splenic dendritic cells in response to Borrelia burgdorferi exposure. Decreases levels of STAT3 phosphorylation in mouse splenic dendritic cells in response to Borrelia burgdorferi exposure and in Borrelia-primed CD4+ T-lymphocytes. Inhibits differentiation of mouse Th17 cells, a subset of CD4+ T-lymphocytes that play a crucial role in protection against extracellular bacteria, in response to Borrelia burgdorferi exposure via inhibition of the IL6/STAT3 signaling pathway. This is Iripin-2 from Ixodes ricinus (Common tick).